We begin with the raw amino-acid sequence, 248 residues long: MARQFFVGGNFKANGTKQQITSIIDNLNKADLPKDVEVVICPPALYLGLAVEQNKQPTVAIGAQNVFDKSCGAFTGETCASQILDVGASWTLTGHSERRTIIKESDEFIAEKTKFALDTGVKVILCIGETLEERKGGVTLDVCARQLDAVSKIVSDWSNIVVAYEPVWAIGTGLAATPEDAEETHKGIRAHLAKSIGAEQAEKTRILYGGSVNGKNAKDFKDKANVDGFLVGGASLKPEFVDIIKSRL.

2 residues coordinate substrate: N10 and K12. H95 acts as the Electrophile in catalysis. Catalysis depends on E165, which acts as the Proton acceptor.

It belongs to the triosephosphate isomerase family. Homodimer.

Its subcellular location is the cytoplasm. It carries out the reaction D-glyceraldehyde 3-phosphate = dihydroxyacetone phosphate. It functions in the pathway carbohydrate biosynthesis; gluconeogenesis. The protein operates within carbohydrate degradation; glycolysis; D-glyceraldehyde 3-phosphate from glycerone phosphate: step 1/1. The polypeptide is Triosephosphate isomerase (TPI1) (Candida albicans (strain SC5314 / ATCC MYA-2876) (Yeast)).